Here is a 122-residue protein sequence, read N- to C-terminus: Ribonuclease pancreatic (122 aa).

The segment covering 1 to 16 (ETPAEKFQRQHMDTEH) has biased composition (basic and acidic residues). The tract at residues 1–20 (ETPAEKFQRQHMDTEHSTAS) is disordered. Substrate is bound by residues Lys6 and Arg9. Catalysis depends on His11, which acts as the Proton acceptor. Disulfide bonds link Cys25–Cys83, Cys39–Cys94, Cys57–Cys109, and Cys64–Cys71. Residues 40 to 44 (KPLNT), Lys65, and Arg84 contribute to the substrate site. His117 acts as the Proton donor in catalysis.

The protein belongs to the pancreatic ribonuclease family. As to quaternary structure, monomer. Interacts with and forms tight 1:1 complexes with RNH1. Dimerization of two such complexes may occur. Interaction with RNH1 inhibits this protein. Post-translationally, not glycosylated although the sequence N-V-T, a recognition site for carbohydrate attachment, is present. As to expression, pancreas.

The protein localises to the secreted. The enzyme catalyses an [RNA] containing cytidine + H2O = an [RNA]-3'-cytidine-3'-phosphate + a 5'-hydroxy-ribonucleotide-3'-[RNA].. It catalyses the reaction an [RNA] containing uridine + H2O = an [RNA]-3'-uridine-3'-phosphate + a 5'-hydroxy-ribonucleotide-3'-[RNA].. Endonuclease that catalyzes the cleavage of RNA on the 3' side of pyrimidine nucleotides. Acts on single-stranded and double-stranded RNA. This is Ribonuclease pancreatic (RNASE1) from Osphranter rufus (Red kangaroo).